Reading from the N-terminus, the 329-residue chain is Tryptophan--tRNA ligase (329 aa).

ATP contacts are provided by residues 9 to 11 (QPS) and 17 to 18 (GN). A 'HIGH' region motif is present at residues 10-18 (PSGIPTIGN). Asp-133 lines the L-tryptophan pocket. ATP is bound by residues 145–147 (GDD), Val-184, and 193–197 (KMSKS). A 'KMSKS' region motif is present at residues 193–197 (KMSKS).

The protein belongs to the class-I aminoacyl-tRNA synthetase family. Homodimer.

Its subcellular location is the cytoplasm. It carries out the reaction tRNA(Trp) + L-tryptophan + ATP = L-tryptophyl-tRNA(Trp) + AMP + diphosphate + H(+). In terms of biological role, catalyzes the attachment of tryptophan to tRNA(Trp). The chain is Tryptophan--tRNA ligase from Staphylococcus aureus (strain MSSA476).